A 386-amino-acid polypeptide reads, in one-letter code: Phosphoglycerate kinase (386 aa).

Residues 21-23 (DLN), R36, 59-62 (HLGR), R113, and R146 contribute to the substrate site. Residues K197, E313, and 339–342 (GGDT) contribute to the ATP site.

This sequence belongs to the phosphoglycerate kinase family. Monomer.

It localises to the cytoplasm. It carries out the reaction (2R)-3-phosphoglycerate + ATP = (2R)-3-phospho-glyceroyl phosphate + ADP. It participates in carbohydrate degradation; glycolysis; pyruvate from D-glyceraldehyde 3-phosphate: step 2/5. The protein is Phosphoglycerate kinase of Serratia proteamaculans (strain 568).